The following is a 740-amino-acid chain: Eukaryotic translation initiation factor 3 subunit B (740 aa).

The segment covering Met-1–Glu-10 has biased composition (polar residues). A disordered region spans residues Met-1 to Asp-22. Positions Leu-13–Asp-22 are enriched in acidic residues. Residues Thr-40–Asp-126 enclose the RRM domain. 5 WD repeats span residues Ala-193 to Gln-230, Pro-232 to Val-289, Glu-302 to Lys-343, Ile-513 to Glu-556, and Val-571 to Ala-609. Residues Asp-695 to Glu-721 form a disordered region.

This sequence belongs to the eIF-3 subunit B family. As to quaternary structure, component of the eukaryotic translation initiation factor 3 (eIF-3) complex.

Its subcellular location is the cytoplasm. Its function is as follows. RNA-binding component of the eukaryotic translation initiation factor 3 (eIF-3) complex, which is involved in protein synthesis of a specialized repertoire of mRNAs and, together with other initiation factors, stimulates binding of mRNA and methionyl-tRNAi to the 40S ribosome. The eIF-3 complex specifically targets and initiates translation of a subset of mRNAs involved in cell proliferation. The polypeptide is Eukaryotic translation initiation factor 3 subunit B (prt1) (Aspergillus niger (strain ATCC MYA-4892 / CBS 513.88 / FGSC A1513)).